Here is a 437-residue protein sequence, read N- to C-terminus: Chromosomal replication initiator protein DnaA (437 aa).

A domain I, interacts with DnaA modulators region spans residues 1–74; the sequence is MNLAWNKILE…EACGDKIPVE (74 aa). The tract at residues 74-98 is domain II; the sequence is EILIETKATSPLQSFLEKSFDQKDF. Positions 99–315 are domain III, AAA+ region; sequence QFNPDYTFET…GALNDIYLYK (217 aa). G142, G144, K145, and T146 together coordinate ATP. Residues 316-437 form a domain IV, binds dsDNA region; that stretch reads KSYSLLFLNL…ERISSKYKLQ (122 aa).

Belongs to the DnaA family. As to quaternary structure, oligomerizes as a right-handed, spiral filament on DNA at oriC.

It is found in the cytoplasm. Its function is as follows. Plays an essential role in the initiation and regulation of chromosomal replication. ATP-DnaA binds to the origin of replication (oriC) to initiate formation of the DNA replication initiation complex once per cell cycle. Binds the DnaA box (a 9 base pair repeat at the origin) and separates the double-stranded (ds)DNA. Forms a right-handed helical filament on oriC DNA; dsDNA binds to the exterior of the filament while single-stranded (ss)DNA is stabiized in the filament's interior. The ATP-DnaA-oriC complex binds and stabilizes one strand of the AT-rich DNA unwinding element (DUE), permitting loading of DNA polymerase. After initiation quickly degrades to an ADP-DnaA complex that is not apt for DNA replication. Binds acidic phospholipids. The chain is Chromosomal replication initiator protein DnaA from Leptospira borgpetersenii serovar Hardjo-bovis (strain JB197).